The following is a 241-amino-acid chain: Small ribosomal subunit protein uS3 (241 aa).

The KH type-2 domain maps to 39-107 (IRTYLKKELY…PLSVNIKEEK (69 aa)). The segment at 214-241 (AEVKEEQQKEGARRPKRAPKRENSGKAE) is disordered. Basic and acidic residues predominate over residues 215–226 (EVKEEQQKEGAR).

It belongs to the universal ribosomal protein uS3 family. In terms of assembly, part of the 30S ribosomal subunit. Forms a tight complex with proteins S10 and S14.

Functionally, binds the lower part of the 30S subunit head. Binds mRNA in the 70S ribosome, positioning it for translation. The chain is Small ribosomal subunit protein uS3 from Sulfurimonas denitrificans (strain ATCC 33889 / DSM 1251) (Thiomicrospira denitrificans (strain ATCC 33889 / DSM 1251)).